A 228-amino-acid polypeptide reads, in one-letter code: Deoxyguanosine kinase (228 aa).

8–16 (GPIGAGKSS) is a binding site for ATP. Substrate is bound by residues Glu-32, Tyr-44, and Gln-55. The active-site Proton acceptor is the Asp-78. Residues Arg-79, Asp-84, and Glu-149 each contribute to the substrate site.

Belongs to the DCK/DGK family. As to quaternary structure, heterodimer of a deoxyadenosine (DAK) and a deoxyguanosine kinase (DGK).

The catalysed reaction is 2'-deoxyguanosine + ATP = dGMP + ADP + H(+). Functionally, DGK/DAK plays an essential role in generating the deoxyribonucleotide precursors, dGTP and dATP, for DNA metabolism. The polypeptide is Deoxyguanosine kinase (Lactobacillus acidophilus (strain ATCC 700396 / NCK56 / N2 / NCFM)).